Consider the following 154-residue polypeptide: UPF0756 membrane protein EAT1b_0668 (154 aa).

The next 5 membrane-spanning stretches (helical) occupy residues 5 to 25 (LFLL…VIIA), 52 to 72 (WGVT…DIGF), 82 to 102 (PVGI…GQGV), 107 to 127 (VDPV…GFMK), and 129 to 149 (IPVG…GYQV).

This sequence belongs to the UPF0756 family.

Its subcellular location is the cell membrane. The protein is UPF0756 membrane protein EAT1b_0668 of Exiguobacterium sp. (strain ATCC BAA-1283 / AT1b).